The following is a 1058-amino-acid chain: Zinc finger protein 865 (1058 aa).

Disordered regions lie at residues 1 to 24, 58 to 134, and 156 to 201; these read MEANQAGSGAGGGGSSGIGGEDGV, LPCT…PPLF, and GNLK…ACDP. Residues 8-21 show a composition bias toward gly residues; that stretch reads SGAGGGGSSGIGGE. The span at 61–78 shows a compositional bias: pro residues; sequence TPGPPPQPPPQPPPPQYD. Low complexity predominate over residues 93–113; that stretch reads SSSSSSSSSSSSSSSSSSSSS. Pro residues predominate over residues 120-133; the sequence is PPLPPTFGAPPPPL. The segment covering 172–187 has biased composition (low complexity); the sequence is GLGTPTGTPGPLTTPS. C2H2-type zinc fingers lie at residues 220–242 and 248–270; these read FPCGVCQKSFKQSSHLVQHMLVH and YECGICGRTYNHVSSLIRHRRCH. A disordered region spans residues 269 to 342; that stretch reads CHKDVPPTPT…PPGVAMPPSA (74 aa). The segment covering 294-324 has biased composition (low complexity); sequence PVSTASATASSDPAAVSSGPSATPATPATST. C2H2-type zinc fingers lie at residues 350 to 372, 378 to 400, 407 to 429, 439 to 461, 546 to 568, 574 to 596, 602 to 624, 664 to 686, and 692 to 714; these read FACSLCWKVFKKPSHLHQHQIIH, FSCSVCSKSFNRRESLKRHVKTH, LPCGICGKVFRDASYLLKHQAAH, YPCDLCGKTYSAPQSLLRHKAAH, FCCGICGRAFGRRETLKRHERIH, HQCPVCGKRFRESFHLSKHHVVH, YKCELCGKVFGYPQSLTRHRQVH, YACSDCGEHFPDLFHVMSHKEAH, and YGCDACGKTFGFIENLMWHKLVH. The segment at 459–486 is disordered; the sequence is AAHAPPVATEPAKDGAASVPQPPPPFPP. Residues 721-743 are disordered; the sequence is LLAPTPSGPQSSDGGSSGGGTDA. 9 consecutive C2H2-type zinc fingers follow at residues 791-813, 819-841, 847-869, 875-897, 903-925, 931-953, 959-981, 988-1010, and 1016-1038; these read FSCATCGQSFKHFLGLVTHKYVH, LGCGLCGQSFAGAYDLLLHRRSH, FRCPVCGKRFWEAALLMRHQRCH, YRCGVCGRGFLRSWYLRQHRVVH, FKCGVCAKHFAQSSSLAEHRRLH, QRCGACGKTFRYRSNLLEHQRLH, YRCEHCGKGFFYLSSVLRHQRAH, LRCPACLKAFKDPGYFRKHLAAH, and FRCSSCGEGFANTYGLKKHRLMH. K801 is covalently cross-linked (Glycyl lysine isopeptide (Lys-Gly) (interchain with G-Cter in SUMO2)). K1039 participates in a covalent cross-link: Glycyl lysine isopeptide (Lys-Gly) (interchain with G-Cter in SUMO2).

The protein belongs to the krueppel C2H2-type zinc-finger protein family.

It is found in the nucleus. In terms of biological role, may be involved in transcriptional regulation. In Mus musculus (Mouse), this protein is Zinc finger protein 865 (Znf865).